The primary structure comprises 705 residues: Glycogen [starch] synthase isoform 2 (705 aa).

Arg-20 lines the UDP pocket. Phosphoserine is present on Ser-159. UDP-alpha-D-glucose contacts are provided by His-193 and Arg-199. Alpha-D-glucose 6-phosphate is bound by residues His-280, Glu-281, Gln-283, His-286, and Lys-290. Arg-320 provides a ligand contact to UDP. Arg-320 provides a ligand contact to UDP-alpha-D-glucose. Ser-363 and Ser-467 each carry phosphoserine. An alpha-D-glucose 6-phosphate-binding site is contributed by His-500. Positions 509, 511, and 512 each coordinate UDP-alpha-D-glucose. Thr-514 contributes to the UDP binding site. The alpha-D-glucose 6-phosphate site is built by Arg-583 and Arg-587. Ser-651 bears the Phosphoserine mark. The residue at position 655 (Ser-655) is a Phosphoserine; by PHO85. Phosphoserine; by PKA occurs at positions 661 and 663. The residue at position 668 (Thr-668) is a Phosphothreonine; by PHO85. The tract at residues 686 to 705 (SLGVNPAADDDDDGPYADDS) is disordered. Positions 693–705 (ADDDDDGPYADDS) are enriched in acidic residues.

The protein belongs to the glycosyltransferase 3 family. As to quaternary structure, interacts with PCL10. Post-translationally, phosphorylated by the cyclin-CDK PCL10-PHO85. Phosphorylation causes inactivation of enzyme.

It is found in the cytoplasm. The protein resides in the cytosol. The enzyme catalyses [(1-&gt;4)-alpha-D-glucosyl](n) + UDP-alpha-D-glucose = [(1-&gt;4)-alpha-D-glucosyl](n+1) + UDP + H(+). It functions in the pathway glycan biosynthesis; glycogen biosynthesis. With respect to regulation, allosteric activation by glucose-6-phosphate, and phosphorylation by a cAMP-dependent kinase. Glycogen synthase participates in the glycogen biosynthetic process along with glycogenin and glycogen branching enzyme. Extends the primer composed of a few glucose units formed by glycogenin by adding new glucose units to it. In this context, glycogen synthase transfers the glycosyl residue from UDP-Glc to the non-reducing end of alpha-1,4-glucan. The polypeptide is Glycogen [starch] synthase isoform 2 (GSY2) (Saccharomyces cerevisiae (strain ATCC 204508 / S288c) (Baker's yeast)).